Reading from the N-terminus, the 483-residue chain is Cobyric acid synthase (483 aa).

The 188-residue stretch at 251–438 (ALIVAVPMLP…LHGVFSADRF (188 aa)) folds into the GATase cobBQ-type domain. C333 (nucleophile) is an active-site residue. The active site involves H430.

The protein belongs to the CobB/CobQ family. CobQ subfamily.

It participates in cofactor biosynthesis; adenosylcobalamin biosynthesis. Catalyzes amidations at positions B, D, E, and G on adenosylcobyrinic A,C-diamide. NH(2) groups are provided by glutamine, and one molecule of ATP is hydrogenolyzed for each amidation. The chain is Cobyric acid synthase from Brucella melitensis biotype 2 (strain ATCC 23457).